A 607-amino-acid chain; its full sequence is Elongation factor 4 (607 aa).

Residues 11–193 (KSIRNFSIIA…QIVAKVPAPT (183 aa)) enclose the tr-type G domain. GTP is bound by residues 23–28 (DHGKST) and 140–143 (NKID).

The protein belongs to the TRAFAC class translation factor GTPase superfamily. Classic translation factor GTPase family. LepA subfamily.

The protein resides in the cell membrane. It catalyses the reaction GTP + H2O = GDP + phosphate + H(+). Functionally, required for accurate and efficient protein synthesis under certain stress conditions. May act as a fidelity factor of the translation reaction, by catalyzing a one-codon backward translocation of tRNAs on improperly translocated ribosomes. Back-translocation proceeds from a post-translocation (POST) complex to a pre-translocation (PRE) complex, thus giving elongation factor G a second chance to translocate the tRNAs correctly. Binds to ribosomes in a GTP-dependent manner. The protein is Elongation factor 4 of Exiguobacterium sibiricum (strain DSM 17290 / CCUG 55495 / CIP 109462 / JCM 13490 / 255-15).